The chain runs to 375 residues: Probable protein-glutamate methylesterase BB_0415 (375 aa).

Residues 6–120 (SVLIIEYFAV…SHEIKKEQII (115 aa)) form the Response regulatory domain. The CheB-type methylesterase domain occupies 183–375 (KLRKFDIIAI…KLLKAILINS (193 aa)). Catalysis depends on residues S195, H221, and D317.

The enzyme catalyses [protein]-L-glutamate 5-O-methyl ester + H2O = L-glutamyl-[protein] + methanol + H(+). The protein is Probable protein-glutamate methylesterase BB_0415 of Borreliella burgdorferi (strain ATCC 35210 / DSM 4680 / CIP 102532 / B31) (Borrelia burgdorferi).